A 318-amino-acid chain; its full sequence is Putative enoyl-CoA hydratase EchA13 (318 aa).

The segment at 90–110 is disordered; the sequence is LGSADDIRERSPGPDQHPSYR.

Belongs to the enoyl-CoA hydratase/isomerase family.

In Mycobacterium tuberculosis (strain ATCC 25618 / H37Rv), this protein is Putative enoyl-CoA hydratase EchA13 (echA13).